The sequence spans 435 residues: T-cell defective protein 2 (435 aa).

The interval 65–146 is disordered; sequence NASTSFQSQP…KTPDSLRKSI (82 aa). Residues 322 to 352 adopt a coiled-coil conformation; sequence TKISAKKEKEQKKSAAKEAALKEAKEKEMRI. A disordered region spans residues 393-419; sequence FFKANPPPAPRAPQAPELASGPRRIPT.

As to expression, strongly expressed in the cytoplasm of the pharynx muscle cells and several head neurons, probably the IL1s or IL2s, throughout development. Also expressed in some other unidentified neurons in the tail region. Weakly expressed in the nuclei of the T-cells and the T-cell daughters. Not expressed in gonads and in P12 cell.

It localises to the nucleus. The protein localises to the cytoplasm. May act synergistically with the Wnt pathways to control T-cell fate specification, gonad development, and P12 cell fate specification. Required for the distribution of pop-1 and tlp-1 proteins. The protein is T-cell defective protein 2 (tcl-2) of Caenorhabditis elegans.